We begin with the raw amino-acid sequence, 323 residues long: Staphylococcal-like nuclease CAN1 (323 aa).

Residue G2 is the site of N-myristoyl glycine attachment. The S-palmitoyl cysteine moiety is linked to residue C11. The TNase-like domain maps to 130 to 306; that stretch reads NTLPVDTKSV…RQKRVGLWAS (177 aa). D143 serves as a coordination point for Ca(2+). R213 is a catalytic residue. D218 lines the Ca(2+) pocket. Catalysis depends on residues E221 and R255.

It belongs to the thermonuclease family. Ca(2+) is required as a cofactor.

It localises to the cell membrane. Its activity is regulated as follows. Inhibited by Zn(2+). In terms of biological role, enzyme that catalyzes the hydrolysis of both DNA and RNA at the 5' position of the phosphodiester bond. Possesses activity toward the single-stranded DNA, double-stranded DNA and RNA. May be involved in genomic DNA degradation during programmed cell death. This chain is Staphylococcal-like nuclease CAN1 (CAN1), found in Arabidopsis thaliana (Mouse-ear cress).